Reading from the N-terminus, the 484-residue chain is Cobyric acid synthase (484 aa).

The GATase cobBQ-type domain occupies 249-438; that stretch reads QLRVAVPVFT…LHGIFDRPET (190 aa). C330 functions as the Nucleophile in the catalytic mechanism. H430 is a catalytic residue.

This sequence belongs to the CobB/CobQ family. CobQ subfamily.

Its pathway is cofactor biosynthesis; adenosylcobalamin biosynthesis. In terms of biological role, catalyzes amidations at positions B, D, E, and G on adenosylcobyrinic A,C-diamide. NH(2) groups are provided by glutamine, and one molecule of ATP is hydrogenolyzed for each amidation. The sequence is that of Cobyric acid synthase from Vibrio cholerae serotype O1 (strain ATCC 39541 / Classical Ogawa 395 / O395).